Here is a 545-residue protein sequence, read N- to C-terminus: MGPDNRRILLATVLSVGILILWQVIFPKKTPPKPAPTPAAEVAKPAAPAAPAPGAAAPAVPAPPPDAPEETVKLAGKGFEATLTTYGGALKSLQLEGDKFRKQEKDREVQIDLVHVTAGQPYPLSLSASPELGGAADVTADPGARAPMRIVAKDASSVTFEGRVGNLAARKTFRVTGKPYELALDVELTGGAGNGTVGVLYPAFMPPDTKSGGIFSGPPLDFVRPVCRAGTTTERFDLAKEGAPEKLEGQVSWAGVDQHYFVAAVLPAEPVGTCTFARGPVKGAGVAALAIPVEGGARKLSLTVYAGPKDLDTLRGYGRGFESAIDYGAVAKFFALFARGLLYVMRWLEAIVRNWGVAIILLTVLVRLVLFPLTYKSMQSMNEMRKLQPEIEKLKAKFGDDREKMNLAVMQLYQKHKVNPLGGCLPMLLQMPVWFALYAALQTSVELYREPFLWMKDLTAHDPYFILPIAMGISSFVMQKLSPQPADNAQAKMMLYFFPGFFTVIMLFVPGGLTLYIFVNNLLSIVQQQLMMKHQRAAPTPAAGK.

A helical membrane pass occupies residues 8-28 (ILLATVLSVGILILWQVIFPK). The segment at 31–69 (PPKPAPTPAAEVAKPAAPAAPAPGAAAPAVPAPPPDAPE) is disordered. Over residues 38–59 (PAAEVAKPAAPAAPAPGAAAPA) the composition is skewed to low complexity. A run of 5 helical transmembrane segments spans residues 325–345 (IDYG…LYVM), 355–375 (WGVA…PLTY), 421–441 (LGGC…YAAL), 458–478 (LTAH…SFVM), and 497–517 (FFPG…TLYI).

The protein belongs to the OXA1/ALB3/YidC family. Type 1 subfamily. In terms of assembly, interacts with the Sec translocase complex via SecD. Specifically interacts with transmembrane segments of nascent integral membrane proteins during membrane integration.

The protein localises to the cell inner membrane. Required for the insertion and/or proper folding and/or complex formation of integral membrane proteins into the membrane. Involved in integration of membrane proteins that insert both dependently and independently of the Sec translocase complex, as well as at least some lipoproteins. Aids folding of multispanning membrane proteins. This is Membrane protein insertase YidC from Anaeromyxobacter dehalogenans (strain 2CP-C).